A 252-amino-acid chain; its full sequence is Phosphoglycolate phosphatase (252 aa).

The active-site Nucleophile is aspartate 13. Residues aspartate 13, aspartate 15, and aspartate 192 each coordinate Mg(2+).

Belongs to the HAD-like hydrolase superfamily. CbbY/CbbZ/Gph/YieH family. As to quaternary structure, monomer. Mg(2+) serves as cofactor. Requires chloride as cofactor.

It catalyses the reaction 2-phosphoglycolate + H2O = glycolate + phosphate. It functions in the pathway organic acid metabolism; glycolate biosynthesis; glycolate from 2-phosphoglycolate: step 1/1. Specifically catalyzes the dephosphorylation of 2-phosphoglycolate. Is involved in the dissimilation of the intracellular 2-phosphoglycolate formed during the DNA repair of 3'-phosphoglycolate ends, a major class of DNA lesions induced by oxidative stress. This is Phosphoglycolate phosphatase from Salmonella typhimurium (strain LT2 / SGSC1412 / ATCC 700720).